Here is a 942-residue protein sequence, read N- to C-terminus: Mitogen-activated protein kinase kinase kinase 14 (942 aa).

The span at 136–152 shows a compositional bias: basic residues; it reads GKRHGKARKKRRKKRSK. Disordered stretches follow at residues 136-156 and 291-326; these read GKRH…SLAQ and VSGQ…SCPS. A Protein kinase domain is found at 402-657; the sequence is MTHQPRVGRG…ELRRKVGKAL (256 aa). The tract at residues 403-655 is interaction with ZFP91; it reads THQPRVGRGS…AMELRRKVGK (253 aa). ATP contacts are provided by residues 408–416 and Lys-431; that span reads VGRGSFGEV. The Proton acceptor role is filled by Asp-517. Thr-561 bears the Phosphothreonine mark. Disordered regions lie at residues 660-756 and 801-823; these read VGGL…FPDR and SDDS…SSGV. Positions 707-720 are enriched in pro residues; sequence EPQPPLPPEPPEPS. Over residues 809–823 the composition is skewed to polar residues; it reads SKASQSSRDTLSSGV.

The protein belongs to the protein kinase superfamily. STE Ser/Thr protein kinase family. MAP kinase kinase kinase subfamily. As to quaternary structure, interacts with TRAF2, TRAF3, TRAF5, TRAF6, IKKA and NF-kappa-B2/P100. Interacts with PELI3. Interacts with NIBP; the interaction is direct. Interacts with ARRB1 and ARRB2. Interacts with GRB10. Interacts with ZFP91. Interacts with NLRP12; this interaction promotes proteasomal degradation of MAP3K14. Directly interacts with DDX3X. Interacts (via C-terminus and kinase domain) with PPPC3A (via N-terminus) and PPP3CB. Post-translationally, phosphorylation at Thr-561 is required to activate its kinase activity and 'Lys-63'-linked polyubiquitination. Phosphorylated by CHUK/IKKA leading to MAP3K14 destabilization. Autophosphorylated. In terms of processing, ubiquitinated. Undergoes both 'Lys-48'- and 'Lys-63'-linked polyubiquitination. 'Lys-48'-linked polyubiquitination leads to its degradation by the proteasome, while 'Lys-63'-linked polyubiquitination stabilizes and activates it.

The protein resides in the cytoplasm. The enzyme catalyses L-seryl-[protein] + ATP = O-phospho-L-seryl-[protein] + ADP + H(+). The catalysed reaction is L-threonyl-[protein] + ATP = O-phospho-L-threonyl-[protein] + ADP + H(+). Functionally, lymphotoxin beta-activated kinase which seems to be exclusively involved in the activation of NF-kappa-B and its transcriptional activity. Phosphorylates CHUK/IKKA. Promotes proteolytic processing of NFKB2/P100, which leads to activation of NF-kappa-B via the non-canonical pathway. Has an essential role in the non-canonical NF-kappa-B signalining that regulates genes encoding molecules involved in B-cell survival, lymphoid organogenesis, and immune response. Could act in a receptor-selective manner. This chain is Mitogen-activated protein kinase kinase kinase 14, found in Mus musculus (Mouse).